Consider the following 404-residue polypeptide: Tyrosine--tRNA ligase (404 aa).

The 'HIGH' region signature appears at 45–54; it reads PTAPDLHLGH. The short motif at 229-233 is the 'KMSKS' region element; sequence KMSKS. ATP is bound at residue lysine 232. Residues 342–402 enclose the S4 RNA-binding domain; it reads IFIASIVRLA…GKKAIAQVTF (61 aa).

Belongs to the class-I aminoacyl-tRNA synthetase family. TyrS type 2 subfamily. As to quaternary structure, homodimer.

The protein resides in the cytoplasm. The catalysed reaction is tRNA(Tyr) + L-tyrosine + ATP = L-tyrosyl-tRNA(Tyr) + AMP + diphosphate + H(+). Functionally, catalyzes the attachment of tyrosine to tRNA(Tyr) in a two-step reaction: tyrosine is first activated by ATP to form Tyr-AMP and then transferred to the acceptor end of tRNA(Tyr). The protein is Tyrosine--tRNA ligase of Acinetobacter baylyi (strain ATCC 33305 / BD413 / ADP1).